We begin with the raw amino-acid sequence, 53 residues long: Conotoxin-like peptide 1 (53 aa).

Positions 1 to 18 (MGVKSALFIMAVFAAANV) are cleaved as a signal peptide. Intrachain disulfides connect C25–C39, C32–C43, and C38–C50.

It is found in the secreted. The polypeptide is Conotoxin-like peptide 1 (CTL-1) (Orgyia pseudotsugata multicapsid polyhedrosis virus (OpMNPV)).